The primary structure comprises 765 residues: Probable dipeptidyl peptidase 4 (765 aa).

The N-terminal stretch at 1–14 (MKWSILLLVGCAAA) is a signal peptide. Asn-35, Asn-78, Asn-101, Asn-110, Asn-169, Asn-218, Asn-465, and Asn-490 each carry an N-linked (GlcNAc...) asparagine glycan. Residue Ser-613 is the Charge relay system of the active site. Asn-665 carries an N-linked (GlcNAc...) asparagine glycan. Residues Asp-690 and His-725 each act as charge relay system in the active site.

The protein belongs to the peptidase S9B family.

Its subcellular location is the secreted. It catalyses the reaction Release of an N-terminal dipeptide, Xaa-Yaa-|-Zaa-, from a polypeptide, preferentially when Yaa is Pro, provided Zaa is neither Pro nor hydroxyproline.. Its function is as follows. Extracellular dipeptidyl-peptidase which removes N-terminal dipeptides sequentially from polypeptides having unsubstituted N-termini provided that the penultimate residue is proline. The chain is Probable dipeptidyl peptidase 4 (dpp4) from Neosartorya fischeri (strain ATCC 1020 / DSM 3700 / CBS 544.65 / FGSC A1164 / JCM 1740 / NRRL 181 / WB 181) (Aspergillus fischerianus).